A 447-amino-acid polypeptide reads, in one-letter code: Adenylosuccinate synthetase (447 aa).

GTP is bound by residues 12-18 and 40-42; these read GDEGKGK and GHT. Catalysis depends on Asp-13, which acts as the Proton acceptor. Asp-13 and Gly-40 together coordinate Mg(2+). IMP contacts are provided by residues 13 to 16, 38 to 41, Thr-128, Arg-142, Gln-223, Thr-238, and Arg-302; these read DEGK and NAGH. The active-site Proton donor is the His-41. A substrate-binding site is contributed by 298–304; that stretch reads TTTGRRR. GTP contacts are provided by residues Arg-304, 330–332, and 412–414; these read KLD and SLG.

Belongs to the adenylosuccinate synthetase family. As to quaternary structure, homodimer. Requires Mg(2+) as cofactor.

The protein localises to the cytoplasm. The enzyme catalyses IMP + L-aspartate + GTP = N(6)-(1,2-dicarboxyethyl)-AMP + GDP + phosphate + 2 H(+). It participates in purine metabolism; AMP biosynthesis via de novo pathway; AMP from IMP: step 1/2. Functionally, plays an important role in the de novo pathway of purine nucleotide biosynthesis. Catalyzes the first committed step in the biosynthesis of AMP from IMP. This chain is Adenylosuccinate synthetase, found in Microcystis aeruginosa (strain NIES-843 / IAM M-2473).